The chain runs to 288 residues: Glucose uptake protein GlcU (288 aa).

10 consecutive transmembrane segments (helical) span residues 4 to 26 (LIAL…VGGG), 33 to 51 (GTTF…TGNA), 56 to 75 (LTII…GQGY), 82 to 104 (LIGV…TLFS), 114 to 136 (GVQV…LTSI), 148 to 170 (NFGK…VVVA), 180 to 197 (ALFF…ILSA), 206 to 225 (TLWN…FMFY), 230 to 252 (VGVA…GGIF), and 264 to 283 (IGIW…SEIL).

Belongs to the GRP transporter (TC 2.A.7.5) family.

The protein localises to the cell membrane. In terms of biological role, involved in the uptake of glucose. This is Glucose uptake protein GlcU (glcU) from Staphylococcus xylosus.